Here is a 576-residue protein sequence, read N- to C-terminus: Protein HYPER-SENSITIVITY-RELATED 4 (576 aa).

The chain crosses the membrane as a helical span at residues 55–75; it reads LATAKTVLTTAASVAATAMLA. 306-313 contacts ATP; it reads GPPGTGKS. The interval 508–532 is disordered; sequence DKAKTEKQELENKKKTKEGTDSVVK.

It belongs to the AAA ATPase family. BCS1 subfamily. In terms of assembly, binds to the Yariv phenylglycoside (beta-D-Glc)(3). Requires Mg(2+) as cofactor.

Its subcellular location is the membrane. The catalysed reaction is ATP + H2O = ADP + phosphate + H(+). The chain is Protein HYPER-SENSITIVITY-RELATED 4 from Arabidopsis thaliana (Mouse-ear cress).